The sequence spans 445 residues: Tubulin beta-1 chain (445 aa).

Residues Gln-11, Glu-69, Ser-138, Gly-142, Thr-143, Gly-144, Asn-204, and Asn-226 each coordinate GTP. Residue Glu-69 participates in Mg(2+) binding. The segment at 422–445 is disordered; the sequence is QYQDAGMDDEYGEEYEDEAPAEEE. The segment covering 427-445 has biased composition (acidic residues); it reads GMDDEYGEEYEDEAPAEEE.

The protein belongs to the tubulin family. Dimer of alpha and beta chains. A typical microtubule is a hollow water-filled tube with an outer diameter of 25 nm and an inner diameter of 15 nM. Alpha-beta heterodimers associate head-to-tail to form protofilaments running lengthwise along the microtubule wall with the beta-tubulin subunit facing the microtubule plus end conferring a structural polarity. Microtubules usually have 13 protofilaments but different protofilament numbers can be found in some organisms and specialized cells. The cofactor is Mg(2+).

Its subcellular location is the cytoplasm. It localises to the cytoskeleton. In terms of biological role, tubulin is the major constituent of microtubules, a cylinder consisting of laterally associated linear protofilaments composed of alpha- and beta-tubulin heterodimers. Microtubules grow by the addition of GTP-tubulin dimers to the microtubule end, where a stabilizing cap forms. Below the cap, tubulin dimers are in GDP-bound state, owing to GTPase activity of alpha-tubulin. The protein is Tubulin beta-1 chain (TUB1) of Colletotrichum graminicola (Maize anthracnose fungus).